Here is a 90-residue protein sequence, read N- to C-terminus: Small ribosomal subunit protein uS15 (90 aa).

This sequence belongs to the universal ribosomal protein uS15 family. In terms of assembly, part of the 30S ribosomal subunit. Forms a bridge to the 50S subunit in the 70S ribosome, contacting the 23S rRNA.

One of the primary rRNA binding proteins, it binds directly to 16S rRNA where it helps nucleate assembly of the platform of the 30S subunit by binding and bridging several RNA helices of the 16S rRNA. Functionally, forms an intersubunit bridge (bridge B4) with the 23S rRNA of the 50S subunit in the ribosome. The protein is Small ribosomal subunit protein uS15 of Helicobacter pylori (strain Shi470).